A 61-amino-acid chain; its full sequence is Alpha-conotoxin PnIB (61 aa).

A signal peptide spans 1–21 (MGMRMMFTVFLLVVLATTVVS). Residues 22 to 44 (FTSDRASDDGNAAASDLIALTIK) constitute a propeptide that is removed on maturation. Disulfide bonds link C46–C52 and C47–C60. The ser-Xaa-Pro motif, crucial for potent interaction with nAChR stretch occupies residues 48-50 (SLP). Sulfotyrosine is present on Y59. A Cysteine amide modification is found at C60.

The protein belongs to the conotoxin A superfamily. In terms of tissue distribution, expressed by the venom duct.

Its subcellular location is the secreted. In terms of biological role, alpha-conotoxins act on postsynaptic membranes, they bind to the nicotinic acetylcholine receptors (nAChR) and thus inhibit them. This toxin blocks mammalian nAChRs (alpha-7/CHRNA7 &gt; alpha-3-beta-2/CHRNA3-CHRNB2). The sequence is that of Alpha-conotoxin PnIB from Conus pennaceus (Feathered cone).